The sequence spans 432 residues: Glutamate-1-semialdehyde 2,1-aminomutase 2 (432 aa).

Lys-268 bears the N6-(pyridoxal phosphate)lysine mark.

It belongs to the class-III pyridoxal-phosphate-dependent aminotransferase family. HemL subfamily. In terms of assembly, homodimer. Requires pyridoxal 5'-phosphate as cofactor.

The protein localises to the cytoplasm. It carries out the reaction (S)-4-amino-5-oxopentanoate = 5-aminolevulinate. It functions in the pathway porphyrin-containing compound metabolism; protoporphyrin-IX biosynthesis; 5-aminolevulinate from L-glutamyl-tRNA(Glu): step 2/2. The chain is Glutamate-1-semialdehyde 2,1-aminomutase 2 from Listeria monocytogenes serovar 1/2a (strain ATCC BAA-679 / EGD-e).